The following is a 31-amino-acid chain: Cytochrome b6-f complex subunit 6 (31 aa).

The chain crosses the membrane as a helical span at residues 3–23 (TITSYFGFLLAALTITPALFI).

The protein belongs to the PetL family. In terms of assembly, the 4 large subunits of the cytochrome b6-f complex are cytochrome b6, subunit IV (17 kDa polypeptide, PetD), cytochrome f and the Rieske protein, while the 4 small subunits are PetG, PetL, PetM and PetN. The complex functions as a dimer.

The protein resides in the plastid. It localises to the chloroplast thylakoid membrane. In terms of biological role, component of the cytochrome b6-f complex, which mediates electron transfer between photosystem II (PSII) and photosystem I (PSI), cyclic electron flow around PSI, and state transitions. PetL is important for photoautotrophic growth as well as for electron transfer efficiency and stability of the cytochrome b6-f complex. The chain is Cytochrome b6-f complex subunit 6 from Zea mays (Maize).